Consider the following 1060-residue polypeptide: CCR4-NOT transcriptional complex subunit CAF120 (1060 aa).

A PH domain is found at 75-204 (RRYHEGVFLI…WNSAIRLCLY (130 aa)). The segment covering 465–481 (KLSYGSKSSSNNSSKNS) has biased composition (low complexity). Disordered regions lie at residues 465–589 (KLSY…TSCG), 801–942 (EHRS…NMQA), and 955–1060 (QQPN…PYAQ). The segment covering 490–504 (LSSSSEQDLNNSDSP) has biased composition (polar residues). Phosphoserine is present on residues Ser491, Ser510, Ser518, Ser538, and Ser556. 2 stretches are compositionally biased toward basic and acidic residues: residues 571 to 589 (NDRK…TSCG) and 801 to 814 (EHRS…RSPE). Residues 845-883 (SITPQRGQPVPSGQQISSYVQPANINSPNKMYGANNSAM) are compositionally biased toward polar residues. Residues Ser871 and Ser885 each carry the phosphoserine modification. Polar residues-rich tracts occupy residues 900–923 (QGWN…TQPQ), 931–942 (PYSTGNRPNMQA), and 1048–1060 (FMPS…PYAQ).

The protein belongs to the CAF120 family. In terms of assembly, subunit of the 1.0 MDa CCR4-NOT core complex that contains CCR4, CAF1, CAF120, NOT1, NOT2, NOT3, NOT4, NOT5, CAF40 and CAF130. In the complex interacts with NOT1. The core complex probably is part of a less characterized 1.9 MDa CCR4-NOT complex.

The protein resides in the cytoplasm. It localises to the nucleus. The protein localises to the bud neck. Its function is as follows. Acts as a component of the CCR4-NOT core complex, which in the nucleus seems to be a general transcription factor, and in the cytoplasm the major mRNA deadenylase involved in mRNA turnover. The NOT protein subcomplex negatively regulates the basal and activated transcription of many genes. Preferentially affects TC-type TATA element-dependent transcription. Could directly or indirectly inhibit component(s) of the general transcription machinery. In Saccharomyces cerevisiae (strain ATCC 204508 / S288c) (Baker's yeast), this protein is CCR4-NOT transcriptional complex subunit CAF120 (CAF120).